The primary structure comprises 193 residues: Imidazoleglycerol-phosphate dehydratase (193 aa).

Belongs to the imidazoleglycerol-phosphate dehydratase family.

It localises to the cytoplasm. It carries out the reaction D-erythro-1-(imidazol-4-yl)glycerol 3-phosphate = 3-(imidazol-4-yl)-2-oxopropyl phosphate + H2O. The protein operates within amino-acid biosynthesis; L-histidine biosynthesis; L-histidine from 5-phospho-alpha-D-ribose 1-diphosphate: step 6/9. The chain is Imidazoleglycerol-phosphate dehydratase from Metallosphaera sedula (strain ATCC 51363 / DSM 5348 / JCM 9185 / NBRC 15509 / TH2).